A 326-amino-acid polypeptide reads, in one-letter code: Malate dehydrogenase (326 aa).

12–18 (GAAGQIA) is an NAD(+) binding site. Substrate is bound by residues Arg93 and Arg99. NAD(+) is bound by residues Asn106, Gln113, and 130–132 (VGN). Residues Asn132 and Arg163 each contribute to the substrate site. The Proton acceptor role is filled by His188.

It belongs to the LDH/MDH superfamily. MDH type 2 family.

It carries out the reaction (S)-malate + NAD(+) = oxaloacetate + NADH + H(+). In terms of biological role, catalyzes the reversible oxidation of malate to oxaloacetate. The polypeptide is Malate dehydrogenase (Corynebacterium diphtheriae (strain ATCC 700971 / NCTC 13129 / Biotype gravis)).